Consider the following 28-residue polypeptide: MSSGGLLLLLGLLTLCAELTPVSSKDRH.

An N-terminal signal peptide occupies residues 1 to 24 (MSSGGLLLLLGLLTLCAELTPVSS).

Heterodimer; disulfide-linked. The A chains have phospholipase A2 activity and the B chains show homology with the basic protease inhibitors. Expressed by the venom gland.

Its subcellular location is the secreted. Beta-1-bungarotoxin is a presynaptic neurotoxin of the venom. The B chain is homologous to venom basic protease inhibitors but has no protease inhibitor activity and blocks voltage-gated potassium channels (Kv). The chain is Beta-bungarotoxin B chain-like from Bungarus multicinctus (Many-banded krait).